Here is a 509-residue protein sequence, read N- to C-terminus: Transcription factor SOX-9 (509 aa).

Disordered stretches follow at residues 1 to 67 (MNLL…SEED) and 160 to 273 (RLRV…FRDV). Residues 30–41 (SAGSPCPSGSGS) are compositionally biased toward low complexity. A compositionally biased stretch (polar residues) spans 42-52 (DTENTRPQENT). Basic and acidic residues-rich tracts occupy residues 56-67 (GEPDLKKESEED) and 160-174 (RLRV…DYKY). The segment at 63-103 (ESEEDKFPVCIREAVSQVLKGYDWTLVPMPVRVNGSSKNKP) is dimerization (DIM). Positions 63 to 103 (ESEEDKFPVCIREAVSQVLKGYDWTLVPMPVRVNGSSKNKP) are PQA. Ser-64 is subject to Phosphoserine. A DNA-binding region (HMG box) is located at residues 105–173 (VKRPMNAFMV…QHKKDHPDYK (69 aa)). Ser-211 carries the post-translational modification Phosphoserine. The transactivation domain (TAM) stretch occupies residues 224 to 307 (PGEHSGQSQG…LPPNGHPGVP (84 aa)). 2 short sequence motifs (9aaTAD) span residues 275–284 (IGELSSDVIS) and 290–298 (DVNEFDQYL). The segment at 334-415 (VWMSKQQAPP…HYSEQQQHSP (82 aa)) is disordered. Residues 341-376 (APPPPPQQPPQAPPAPQAPPQPQAAPPQQPAAPPQQ) are compositionally biased toward pro residues. The segment covering 380-415 (HTLTTLSSEPGQSQRTHIKTEQLSPSHYSEQQQHSP) has biased composition (polar residues). The tract at residues 394–509 (RTHIKTEQLS…QPVYTQLTRP (116 aa)) is transactivation domain (TAC). Residue Lys-398 forms a Glycyl lysine isopeptide (Lys-Gly) (interchain with G-Cter in ubiquitin) linkage. A 9aaTAD 3 motif is present at residues 460 to 468 (TGLYSTFTY). Positions 479–509 (PIADTSGVPSIPQTHSPQHWEQPVYTQLTRP) are disordered. Over residues 485 to 509 (GVPSIPQTHSPQHWEQPVYTQLTRP) the composition is skewed to polar residues.

Homodimer; homodimerization is required for activity. Interacts (via C-terminus) with ZNF219; forming a complex that binds to the COL2A1 promoter and activates COL2A1 expression. Interacts with DDRGK1. Interacts with EP300/p300. Interacts with beta-catenin (CTNNB1); inhibiting CTNNB1 activity by competing with the binding sites of TCF/LEF within CTNNB1. Post-translationally, acetylated; acetylation impairs nuclear localization and ability to transactivate expression of target genes. Deacetylated by SIRT1. In terms of processing, phosphorylation at Ser-64 and Ser-211 by PKA increases transcriptional activity and may help delay chondrocyte maturation downstream of PTHLH/PTHrP signaling. Phosphorylation at either Ser-64 or Ser-211 is required for sumoylation, but phosphorylation is not dependent on sumoylation. Phosphorylated on tyrosine residues; tyrosine dephosphorylation by PTPN11/SHP2 blocks SOX9 phosphorylation by PKA and subsequent SUMOylation. Sumoylated; phosphorylation at either Ser-64 or Ser-211 is required for sumoylation. Sumoylation is induced by BMP signaling pathway. Post-translationally, ubiquitinated; ubiquitination leads to proteasomal degradation and is negatively regulated by DDRGK1.

It localises to the nucleus. Its function is as follows. Transcription factor that plays a key role in chondrocytes differentiation and skeletal development. Specifically binds the 5'-ACAAAG-3' DNA motif present in enhancers and super-enhancers and promotes expression of genes important for chondrogenesis, including cartilage matrix protein-coding genes COL2A1, COL4A2, COL9A1, COL11A2 and ACAN, SOX5 and SOX6. Also binds to some promoter regions. Plays a central role in successive steps of chondrocyte differentiation. Absolutely required for precartilaginous condensation, the first step in chondrogenesis during which skeletal progenitors differentiate into prechondrocytes. Together with SOX5 and SOX6, required for overt chondrogenesis when condensed prechondrocytes differentiate into early stage chondrocytes, the second step in chondrogenesis. Later, required to direct hypertrophic maturation and block osteoblast differentiation of growth plate chondrocytes: maintains chondrocyte columnar proliferation, delays prehypertrophy and then prevents osteoblastic differentiation of chondrocytes by lowering beta-catenin (CTNNB1) signaling and RUNX2 expression. Also required for chondrocyte hypertrophy, both indirectly, by keeping the lineage fate of chondrocytes, and directly, by remaining present in upper hypertrophic cells and transactivating COL10A1 along with MEF2C. Low lipid levels are the main nutritional determinant for chondrogenic commitment of skeletal progenitor cells: when lipids levels are low, FOXO (FOXO1 and FOXO3) transcription factors promote expression of SOX9, which induces chondrogenic commitment and suppresses fatty acid oxidation. Mechanistically, helps, but is not required, to remove epigenetic signatures of transcriptional repression and deposit active promoter and enhancer marks at chondrocyte-specific genes. Acts in cooperation with the Hedgehog pathway-dependent GLI (GLI1 and GLI3) transcription factors. In addition to cartilage development, also acts as a regulator of proliferation and differentiation in epithelial stem/progenitor cells: involved in the lung epithelium during branching morphogenesis, by balancing proliferation and differentiation and regulating the extracellular matrix. Controls epithelial branching during kidney development. This is Transcription factor SOX-9 (SOX9) from Callithrix jacchus (White-tufted-ear marmoset).